The chain runs to 77 residues: Acyl carrier protein (77 aa).

The Carrier domain occupies methionine 1–glycine 76. An O-(pantetheine 4'-phosphoryl)serine modification is found at serine 36.

This sequence belongs to the acyl carrier protein (ACP) family. 4'-phosphopantetheine is transferred from CoA to a specific serine of apo-ACP by AcpS. This modification is essential for activity because fatty acids are bound in thioester linkage to the sulfhydryl of the prosthetic group.

Its subcellular location is the cytoplasm. The protein operates within lipid metabolism; fatty acid biosynthesis. In terms of biological role, carrier of the growing fatty acid chain in fatty acid biosynthesis. This Campylobacter curvus (strain 525.92) protein is Acyl carrier protein.